Here is a 420-residue protein sequence, read N- to C-terminus: Tyrosine--tRNA ligase 1 (420 aa).

Tyrosine 35 is an L-tyrosine binding site. The 'HIGH' region motif lies at 40-49 (PTAGSLHIGH). The L-tyrosine site is built by tyrosine 172 and glutamine 176. The 'KMSKS' region signature appears at 232–236 (KFGKT). An ATP-binding site is contributed by lysine 235. Residues 355–419 (INIAELLVKS…GKKQFRLIKL (65 aa)) form the S4 RNA-binding domain.

Belongs to the class-I aminoacyl-tRNA synthetase family. TyrS type 1 subfamily. In terms of assembly, homodimer.

It is found in the cytoplasm. It carries out the reaction tRNA(Tyr) + L-tyrosine + ATP = L-tyrosyl-tRNA(Tyr) + AMP + diphosphate + H(+). Its function is as follows. Catalyzes the attachment of tyrosine to tRNA(Tyr) in a two-step reaction: tyrosine is first activated by ATP to form Tyr-AMP and then transferred to the acceptor end of tRNA(Tyr). This chain is Tyrosine--tRNA ligase 1, found in Pseudoalteromonas translucida (strain TAC 125).